The primary structure comprises 293 residues: Protease HtpX homolog (293 aa).

2 helical membrane passes run 4 to 24 (IFLFIVTNLAVMVVLSATLRV) and 40 to 60 (SLLILSVVIGFTGAIISLLIS). Histidine 146 provides a ligand contact to Zn(2+). The active site involves glutamate 147. Histidine 150 contributes to the Zn(2+) binding site. Helical transmembrane passes span 161-181 (LIQGVVNTFVVFLARVVGYFI) and 197-217 (FITVLVCEIIFGLLASIIVAW). Glutamate 223 serves as a coordination point for Zn(2+).

It belongs to the peptidase M48B family. Zn(2+) is required as a cofactor.

It is found in the cell inner membrane. The polypeptide is Protease HtpX homolog (Bordetella petrii (strain ATCC BAA-461 / DSM 12804 / CCUG 43448)).